The primary structure comprises 131 residues: Small ribosomal subunit protein uS11 (131 aa).

This sequence belongs to the universal ribosomal protein uS11 family. As to quaternary structure, part of the 30S ribosomal subunit. Interacts with proteins S7 and S18. Binds to IF-3.

Its function is as follows. Located on the platform of the 30S subunit, it bridges several disparate RNA helices of the 16S rRNA. Forms part of the Shine-Dalgarno cleft in the 70S ribosome. In Bacillus pumilus (strain SAFR-032), this protein is Small ribosomal subunit protein uS11.